Here is a 217-residue protein sequence, read N- to C-terminus: Uracil-DNA glycosylase (217 aa).

Asp62 (proton acceptor) is an active-site residue.

The protein belongs to the uracil-DNA glycosylase (UDG) superfamily. UNG family.

The protein localises to the cytoplasm. The catalysed reaction is Hydrolyzes single-stranded DNA or mismatched double-stranded DNA and polynucleotides, releasing free uracil.. In terms of biological role, excises uracil residues from the DNA which can arise as a result of misincorporation of dUMP residues by DNA polymerase or due to deamination of cytosine. This chain is Uracil-DNA glycosylase, found in Streptococcus equi subsp. equi (strain 4047).